Here is a 173-residue protein sequence, read N- to C-terminus: Soluble secreted antigen MPT53 (173 aa).

The first 38 residues, M1 to A38, serve as a signal peptide directing secretion. An intrachain disulfide couples C73 to C76.

This sequence belongs to the thioredoxin family.

It is found in the secreted. Disulfide oxidoreductase that catalyzes the oxidation of reduced, unfolded secreted proteins to form disulfide bonds. Despite a weak homology to thioredoxin this cannot serve as a substrate for thioredoxin reductase. In Mycobacterium bovis (strain ATCC BAA-935 / AF2122/97), this protein is Soluble secreted antigen MPT53 (mpt53).